The sequence spans 563 residues: Arginine--tRNA ligase (563 aa).

A 'HIGH' region motif is present at residues 121-131 (PNIAKPFSIGH).

It belongs to the class-I aminoacyl-tRNA synthetase family. As to quaternary structure, monomer.

It is found in the cytoplasm. It carries out the reaction tRNA(Arg) + L-arginine + ATP = L-arginyl-tRNA(Arg) + AMP + diphosphate. The chain is Arginine--tRNA ligase from Streptococcus thermophilus (strain ATCC BAA-250 / LMG 18311).